Consider the following 655-residue polypeptide: Protein npp-24 (655 aa).

Residues 263–283 (ICSVFVLVSGGGVLSHLVVFP) traverse the membrane as a helical segment.

It localises to the membrane. The protein is Protein npp-24 of Caenorhabditis elegans.